The chain runs to 210 residues: Orotate phosphoribosyltransferase (210 aa).

5-phospho-alpha-D-ribose 1-diphosphate contacts are provided by residues Arg-94, Lys-98, His-100, and 120-128 (EDLISTGGS). Ser-124 is a binding site for orotate.

The protein belongs to the purine/pyrimidine phosphoribosyltransferase family. PyrE subfamily. As to quaternary structure, homodimer. It depends on Mg(2+) as a cofactor.

It carries out the reaction orotidine 5'-phosphate + diphosphate = orotate + 5-phospho-alpha-D-ribose 1-diphosphate. It participates in pyrimidine metabolism; UMP biosynthesis via de novo pathway; UMP from orotate: step 1/2. Catalyzes the transfer of a ribosyl phosphate group from 5-phosphoribose 1-diphosphate to orotate, leading to the formation of orotidine monophosphate (OMP). This is Orotate phosphoribosyltransferase from Bacillus mycoides (strain KBAB4) (Bacillus weihenstephanensis).